The sequence spans 181 residues: Endoribonuclease YbeY (181 aa).

Zn(2+)-binding residues include histidine 140, histidine 144, and histidine 150.

It belongs to the endoribonuclease YbeY family. The cofactor is Zn(2+).

It localises to the cytoplasm. Single strand-specific metallo-endoribonuclease involved in late-stage 70S ribosome quality control and in maturation of the 3' terminus of the 16S rRNA. This is Endoribonuclease YbeY from Dinoroseobacter shibae (strain DSM 16493 / NCIMB 14021 / DFL 12).